The following is a 414-amino-acid chain: Cyclic di-GMP phosphodiesterase PA4108 (414 aa).

Residues 133–330 form the HD-GYP domain; that stretch reads ISASVLRHPN…YPVGALVRLE (198 aa). Residues histidine 160, histidine 192, aspartate 193, histidine 221, histidine 246, and histidine 247 each contribute to the a divalent metal cation site.

In terms of assembly, monomer.

The catalysed reaction is 3',3'-c-di-GMP + 2 H2O = 2 GMP + 2 H(+). Its activity is regulated as follows. Activated by Mg(2+) and Mn(2+). Functionally, phosphodiesterase (PDE) that catalyzes the hydrolysis of cyclic diguanylate (c-di-GMP) to GMP. Hydrolyzes c-di-GMP to GMP in a two-step reaction, via the linear intermediate 5'-phosphoguanylyl(3'-&gt;5')guanosine (pGpG). In vitro, can use pGpG as an alternative substrate and hydrolyze it into GMP. Acts in regulation of motility, synthesis of virulence determinants and biofilm architecture. In Pseudomonas aeruginosa (strain ATCC 15692 / DSM 22644 / CIP 104116 / JCM 14847 / LMG 12228 / 1C / PRS 101 / PAO1), this protein is Cyclic di-GMP phosphodiesterase PA4108.